Reading from the N-terminus, the 869-residue chain is Valine--tRNA ligase (869 aa).

The short motif at 47–57 (PYPTGNFHIGN) is the 'HIGH' region element. The short motif at 521 to 525 (KMSKS) is the 'KMSKS' region element. Residue Lys524 participates in ATP binding.

It belongs to the class-I aminoacyl-tRNA synthetase family. ValS type 2 subfamily.

The protein resides in the cytoplasm. The catalysed reaction is tRNA(Val) + L-valine + ATP = L-valyl-tRNA(Val) + AMP + diphosphate. Catalyzes the attachment of valine to tRNA(Val). As ValRS can inadvertently accommodate and process structurally similar amino acids such as threonine, to avoid such errors, it has a 'posttransfer' editing activity that hydrolyzes mischarged Thr-tRNA(Val) in a tRNA-dependent manner. The chain is Valine--tRNA ligase from Methanosarcina acetivorans (strain ATCC 35395 / DSM 2834 / JCM 12185 / C2A).